A 311-amino-acid chain; its full sequence is Maspardin (311 aa).

An AB hydrolase-1 domain is found at 86-159 (EFCDGFRKLL…NSFWLMPSFM (74 aa)).

Belongs to the AB hydrolase superfamily.

The protein resides in the cytoplasm. The protein is Maspardin (spg21) of Danio rerio (Zebrafish).